The primary structure comprises 113 residues: Large ribosomal subunit protein uL22 (113 aa).

It belongs to the universal ribosomal protein uL22 family. Part of the 50S ribosomal subunit.

In terms of biological role, this protein binds specifically to 23S rRNA; its binding is stimulated by other ribosomal proteins, e.g. L4, L17, and L20. It is important during the early stages of 50S assembly. It makes multiple contacts with different domains of the 23S rRNA in the assembled 50S subunit and ribosome. Its function is as follows. The globular domain of the protein is located near the polypeptide exit tunnel on the outside of the subunit, while an extended beta-hairpin is found that lines the wall of the exit tunnel in the center of the 70S ribosome. This Neorickettsia sennetsu (strain ATCC VR-367 / Miyayama) (Ehrlichia sennetsu) protein is Large ribosomal subunit protein uL22.